Here is a 142-residue protein sequence, read N- to C-terminus: MFLLDANVLLAAHRGDHPNHRTVRPWFDRLLAADDPFTVPNLVWASFLRLATNRRIFEIPSPRAEAFAFVEAVTAQPHHLPTNPGPRHLMLLRKLCDEADASGDLIPDAVLAAIAVGHHCAVVSLDRDFARFASVRHIRPPL.

In terms of domain architecture, PINc spans 3–139 (LLDANVLLAA…ARFASVRHIR (137 aa)). 2 residues coordinate Mg(2+): aspartate 5 and aspartate 108.

Belongs to the PINc/VapC protein family. The cofactor is Mg(2+).

Functionally, toxic component of a type II toxin-antitoxin (TA) system. An RNase. Its toxic effect is neutralized by coexpression with cognate antitoxin VapB31. This chain is Ribonuclease VapC31, found in Mycobacterium tuberculosis (strain CDC 1551 / Oshkosh).